Here is a 332-residue protein sequence, read N- to C-terminus: Adenosine deaminase (332 aa).

Zn(2+)-binding residues include His-12 and His-14. Substrate contacts are provided by His-14, Asp-16, and Gly-170. His-197 lines the Zn(2+) pocket. Glu-200 serves as the catalytic Proton donor. Position 278 (Asp-278) interacts with Zn(2+). Asp-279 lines the substrate pocket.

Belongs to the metallo-dependent hydrolases superfamily. Adenosine and AMP deaminases family. Adenosine deaminase subfamily. Requires Zn(2+) as cofactor.

The enzyme catalyses adenosine + H2O + H(+) = inosine + NH4(+). The catalysed reaction is 2'-deoxyadenosine + H2O + H(+) = 2'-deoxyinosine + NH4(+). Catalyzes the hydrolytic deamination of adenosine and 2-deoxyadenosine. The chain is Adenosine deaminase from Erwinia tasmaniensis (strain DSM 17950 / CFBP 7177 / CIP 109463 / NCPPB 4357 / Et1/99).